A 396-amino-acid chain; its full sequence is Succinyl-CoA:mesaconate CoA-transferase (396 aa).

Asp175 serves as the catalytic Nucleophile.

It belongs to the CoA-transferase III family. In terms of assembly, homodimer.

The catalysed reaction is mesaconate + succinyl-CoA = 2-methylfumaryl-CoA + succinate. Shows highest activity at 4 M KCl. Does not require divalent ions for activity. Functionally, involved in the methylaspartate cycle. Catalyzes the transfer of the CoA moiety from succinyl-CoA to mesaconate to generate mesaconyl-CoA (2-methylfumaryl-CoA) and succinate. Also shows high activity with methylsuccinate as CoA-acceptor, and only low activity with glutarate, acrylate and itaconate. Cannot use other CoA donors like acetyl-CoA, propionyl-CoA, butyryl-CoA or acetoacetyl-CoA. This Haloarcula hispanica (strain ATCC 33960 / DSM 4426 / JCM 8911 / NBRC 102182 / NCIMB 2187 / VKM B-1755) protein is Succinyl-CoA:mesaconate CoA-transferase.